Consider the following 293-residue polypeptide: 4-diphosphocytidyl-2-C-methyl-D-erythritol kinase (293 aa).

The active site involves Lys16. 99-109 (PMGAGLGGGSS) contributes to the ATP binding site. The active site involves Asp141.

This sequence belongs to the GHMP kinase family. IspE subfamily.

The catalysed reaction is 4-CDP-2-C-methyl-D-erythritol + ATP = 4-CDP-2-C-methyl-D-erythritol 2-phosphate + ADP + H(+). The protein operates within isoprenoid biosynthesis; isopentenyl diphosphate biosynthesis via DXP pathway; isopentenyl diphosphate from 1-deoxy-D-xylulose 5-phosphate: step 3/6. Catalyzes the phosphorylation of the position 2 hydroxy group of 4-diphosphocytidyl-2C-methyl-D-erythritol. This is 4-diphosphocytidyl-2-C-methyl-D-erythritol kinase from Burkholderia cenocepacia (strain HI2424).